The chain runs to 122 residues: Large ribosomal subunit protein uL14 (122 aa).

The protein belongs to the universal ribosomal protein uL14 family. Part of the 50S ribosomal subunit. Forms a cluster with proteins L3 and L19. In the 70S ribosome, L14 and L19 interact and together make contacts with the 16S rRNA in bridges B5 and B8.

In terms of biological role, binds to 23S rRNA. Forms part of two intersubunit bridges in the 70S ribosome. In Pseudomonas fluorescens (strain ATCC BAA-477 / NRRL B-23932 / Pf-5), this protein is Large ribosomal subunit protein uL14.